The following is a 650-amino-acid chain: FAS-associated factor 1 (650 aa).

Residues 1–57 (MASNMDREMILADFQACTGIENIDEAITLLEQNNWDLVAAINGVIPQENGILQSEYG) form the UBA domain. The interval 62–87 (PGPAFNPASHPASAPTSSSSSAFRPV) is disordered. Positions 68–83 (PASHPASAPTSSSSSA) are enriched in low complexity. Residue Ser320 is modified to Phosphoserine. Residues 569-646 (NAEPVSKLRI…KLFPQETLFL (78 aa)) enclose the UBX domain. Thr580 is modified (phosphothreonine). A Phosphoserine modification is found at Ser582.

In terms of assembly, interacts with CDT1 and ATPase VCP/p97. Interacts (via UBA domain) with FAS (via death domain). Interacts (via UBA domain) with NLRP12 (via DAPIN/PYRIN domain). As to expression, most abundant in testis, slightly less abundant in skeletal muscle and heart, followed by prostate, thymus, ovary, small intestine, and colon. Not detected in the peripheral blood leukocytes.

The protein localises to the nucleus. Ubiquitin-binding protein. Required for the progression of DNA replication forks by targeting DNA replication licensing factor CDT1 for degradation. Potentiates but cannot initiate FAS-induced apoptosis. This chain is FAS-associated factor 1 (FAF1), found in Homo sapiens (Human).